The chain runs to 490 residues: MPRFPDQLLYIGGRYVPARGGHTFEVVNPATGEVLANVHNADADDLDAAVDSAKAGQRHWAALTVVERSRILLRAVALLRERNDALAELETLNTGKPLSETRSVDIVTGADVLEYYAGVAQALQGVQVPLREGSFFYTRHEPLGVVGAIGAWNYPIQIALWKAAPALAAGNAMIFKPSEVTPLTALKLAEIFTEAGLPDGVFNVLPGDGASVGHALTEHPEIEKISFTGGTATGRKVMASASSSSLKDVTMELGGKSPLIVCADADLDLAADIAMMANFYSSGQVCTNGTRVFVPRALRTAFEARLLARVQRIHIGDPLDERTTFGPMVSAAHMQRVLEHIEQGKAEGARLLFGGERLRDGALAQGCYVAPTIFSDCTDVMTIVREEIFGPVLSLLTYDDEDEAITRANATSYGLAAGVVTPDLSRAHRLIHRLEAGICWINTWGESPAPMPVGGYKQSGVGRENGLATLQAYTRTKSVQVELERYASVF.

Residue N93 participates in K(+) binding. 150-152 (GAW) contributes to the NAD(+) binding site. K162 functions as the Charge relay system in the catalytic mechanism. 176-179 (KPSE) lines the NAD(+) pocket. Position 180 (V180) interacts with K(+). Residue 230–233 (GTAT) coordinates NAD(+). L246 is a K(+) binding site. E252 acts as the Proton acceptor in catalysis. Positions 254, 286, and 387 each coordinate NAD(+). The Nucleophile role is filled by C286. C286 bears the Cysteine sulfenic acid (-SOH) mark. The K(+) site is built by K457 and G460. E464 serves as the catalytic Charge relay system.

Belongs to the aldehyde dehydrogenase family. As to quaternary structure, dimer of dimers. Requires K(+) as cofactor.

The enzyme catalyses betaine aldehyde + NAD(+) + H2O = glycine betaine + NADH + 2 H(+). It functions in the pathway amine and polyamine biosynthesis; betaine biosynthesis via choline pathway; betaine from betaine aldehyde: step 1/1. Involved in the biosynthesis of the osmoprotectant glycine betaine. Catalyzes the irreversible oxidation of betaine aldehyde to the corresponding acid. The sequence is that of Betaine aldehyde dehydrogenase from Xanthomonas campestris pv. campestris (strain ATCC 33913 / DSM 3586 / NCPPB 528 / LMG 568 / P 25).